The primary structure comprises 336 residues: Holliday junction branch migration complex subunit RuvB (336 aa).

The interval 1 to 182 (MKERIVNLET…FGMSFRMQFY (182 aa)) is large ATPase domain (RuvB-L). ATP contacts are provided by residues Leu-21, Arg-22, Gly-63, Lys-66, Thr-67, Ser-68, 129–131 (EDF), Arg-172, Tyr-182, and Arg-219. Thr-67 contributes to the Mg(2+) binding site. The segment at 183 to 253 (SPSELALIIK…ITLHALNELG (71 aa)) is small ATPAse domain (RuvB-S). Residues 256–336 (ELGFDEADLA…IPTLNPQTLF (81 aa)) are head domain (RuvB-H). Residues Arg-310 and Arg-315 each contribute to the DNA site.

This sequence belongs to the RuvB family. In terms of assembly, homohexamer. Forms an RuvA(8)-RuvB(12)-Holliday junction (HJ) complex. HJ DNA is sandwiched between 2 RuvA tetramers; dsDNA enters through RuvA and exits via RuvB. An RuvB hexamer assembles on each DNA strand where it exits the tetramer. Each RuvB hexamer is contacted by two RuvA subunits (via domain III) on 2 adjacent RuvB subunits; this complex drives branch migration. In the full resolvosome a probable DNA-RuvA(4)-RuvB(12)-RuvC(2) complex forms which resolves the HJ.

Its subcellular location is the cytoplasm. It catalyses the reaction ATP + H2O = ADP + phosphate + H(+). In terms of biological role, the RuvA-RuvB-RuvC complex processes Holliday junction (HJ) DNA during genetic recombination and DNA repair, while the RuvA-RuvB complex plays an important role in the rescue of blocked DNA replication forks via replication fork reversal (RFR). RuvA specifically binds to HJ cruciform DNA, conferring on it an open structure. The RuvB hexamer acts as an ATP-dependent pump, pulling dsDNA into and through the RuvAB complex. RuvB forms 2 homohexamers on either side of HJ DNA bound by 1 or 2 RuvA tetramers; 4 subunits per hexamer contact DNA at a time. Coordinated motions by a converter formed by DNA-disengaged RuvB subunits stimulates ATP hydrolysis and nucleotide exchange. Immobilization of the converter enables RuvB to convert the ATP-contained energy into a lever motion, pulling 2 nucleotides of DNA out of the RuvA tetramer per ATP hydrolyzed, thus driving DNA branch migration. The RuvB motors rotate together with the DNA substrate, which together with the progressing nucleotide cycle form the mechanistic basis for DNA recombination by continuous HJ branch migration. Branch migration allows RuvC to scan DNA until it finds its consensus sequence, where it cleaves and resolves cruciform DNA. The protein is Holliday junction branch migration complex subunit RuvB of Helicobacter pylori (strain Shi470).